The following is a 166-amino-acid chain: ATP synthase subunit b (166 aa).

A helical transmembrane segment spans residues Thr-15 to Val-37.

This sequence belongs to the ATPase B chain family. As to quaternary structure, F-type ATPases have 2 components, F(1) - the catalytic core - and F(0) - the membrane proton channel. F(1) has five subunits: alpha(3), beta(3), gamma(1), delta(1), epsilon(1). F(0) has three main subunits: a(1), b(2) and c(10-14). The alpha and beta chains form an alternating ring which encloses part of the gamma chain. F(1) is attached to F(0) by a central stalk formed by the gamma and epsilon chains, while a peripheral stalk is formed by the delta and b chains.

It localises to the cell membrane. In terms of biological role, f(1)F(0) ATP synthase produces ATP from ADP in the presence of a proton or sodium gradient. F-type ATPases consist of two structural domains, F(1) containing the extramembraneous catalytic core and F(0) containing the membrane proton channel, linked together by a central stalk and a peripheral stalk. During catalysis, ATP synthesis in the catalytic domain of F(1) is coupled via a rotary mechanism of the central stalk subunits to proton translocation. Functionally, component of the F(0) channel, it forms part of the peripheral stalk, linking F(1) to F(0). This Lactobacillus gasseri (strain ATCC 33323 / DSM 20243 / BCRC 14619 / CIP 102991 / JCM 1131 / KCTC 3163 / NCIMB 11718 / NCTC 13722 / AM63) protein is ATP synthase subunit b.